A 58-amino-acid chain; its full sequence is Cecropin-A (58 aa).

The N-terminal stretch at 1-23 is a signal peptide; it reads MNFSKIFIFVVLAVLLLCSQTEA. At Leu57 the chain carries Leucine amide.

Belongs to the cecropin family. Relatively abundant in head, thorax and to a lesser extent in abdominal carcass and anterior midgut.

The protein resides in the secreted. In terms of biological role, antibacterial activity against several Gram-positive and Gram-negative bacteria. Antifungal activity against A.fumigatus, B.cinerea, F.culmorum, F.oxysporum, N.crassa, C.albicans, C.neoformans and S.cerevisiae. This chain is Cecropin-A (CecA), found in Anopheles gambiae (African malaria mosquito).